Reading from the N-terminus, the 238-residue chain is Uridylate kinase (238 aa).

10–13 contacts ATP; the sequence is KFSG. Residues 18-23 form an involved in allosteric activation by GTP region; the sequence is GDSGFG. Residue Gly-52 coordinates UMP. Positions 53 and 57 each coordinate ATP. UMP is bound by residues Asp-73 and 134–141; that span reads TGNPFFTT. ATP is bound by residues Thr-161, Tyr-167, and Asp-170.

It belongs to the UMP kinase family. In terms of assembly, homohexamer.

Its subcellular location is the cytoplasm. The enzyme catalyses UMP + ATP = UDP + ADP. It functions in the pathway pyrimidine metabolism; CTP biosynthesis via de novo pathway; UDP from UMP (UMPK route): step 1/1. Allosterically activated by GTP. Inhibited by UTP. In terms of biological role, catalyzes the reversible phosphorylation of UMP to UDP. The sequence is that of Uridylate kinase from Campylobacter curvus (strain 525.92).